We begin with the raw amino-acid sequence, 202 residues long: ATP-dependent Clp protease proteolytic subunit (202 aa).

The Nucleophile role is filled by S107. The active site involves H132.

This sequence belongs to the peptidase S14 family. In terms of assembly, fourteen ClpP subunits assemble into 2 heptameric rings which stack back to back to give a disk-like structure with a central cavity, resembling the structure of eukaryotic proteasomes.

The protein localises to the cytoplasm. It carries out the reaction Hydrolysis of proteins to small peptides in the presence of ATP and magnesium. alpha-casein is the usual test substrate. In the absence of ATP, only oligopeptides shorter than five residues are hydrolyzed (such as succinyl-Leu-Tyr-|-NHMec, and Leu-Tyr-Leu-|-Tyr-Trp, in which cleavage of the -Tyr-|-Leu- and -Tyr-|-Trp bonds also occurs).. Functionally, cleaves peptides in various proteins in a process that requires ATP hydrolysis. Has a chymotrypsin-like activity. Plays a major role in the degradation of misfolded proteins. The chain is ATP-dependent Clp protease proteolytic subunit from Shewanella amazonensis (strain ATCC BAA-1098 / SB2B).